We begin with the raw amino-acid sequence, 70 residues long: Putative membrane protein insertion efficiency factor (70 aa).

It belongs to the UPF0161 family.

It is found in the cell membrane. Its function is as follows. Could be involved in insertion of integral membrane proteins into the membrane. The protein is Putative membrane protein insertion efficiency factor of Chloroflexus aurantiacus (strain ATCC 29366 / DSM 635 / J-10-fl).